Here is a 99-residue protein sequence, read N- to C-terminus: Integration host factor subunit beta (99 aa).

This sequence belongs to the bacterial histone-like protein family. As to quaternary structure, heterodimer of an alpha and a beta chain.

In terms of biological role, this protein is one of the two subunits of integration host factor, a specific DNA-binding protein that functions in genetic recombination as well as in transcriptional and translational control. In Rhizobium etli (strain CIAT 652), this protein is Integration host factor subunit beta.